Here is a 205-residue protein sequence, read N- to C-terminus: RPW8-like protein 2 (205 aa).

The RPW8 domain occupies 1-153 (MPLTEIIAGA…IMGQPIDCII (153 aa)). A helical membrane pass occupies residues 7-23 (IAGAALGLALQILHEAI). Coiled coils occupy residues 70 to 92 (EDLK…LKRR) and 125 to 147 (ADIK…IMGQ).

Belongs to the plant RPW8 protein family.

It localises to the membrane. Its function is as follows. Probable disease resistance (R) protein. The protein is RPW8-like protein 2 of Arabidopsis thaliana (Mouse-ear cress).